We begin with the raw amino-acid sequence, 73 residues long: ATP synthase subunit 9, mitochondrial (73 aa).

2 consecutive transmembrane segments (helical) span residues 12–32 (VAAL…AALI) and 50–70 (ILGF…SFLL).

Belongs to the ATPase C chain family. As to quaternary structure, F-type ATPases have 2 components, CF(1) - the catalytic core - and CF(0) - the membrane proton channel. CF(1) has five subunits: alpha(3), beta(3), gamma(1), delta(1), epsilon(1). CF(0) has three main subunits: a, b and c.

It is found in the mitochondrion inner membrane. Mitochondrial membrane ATP synthase (F(1)F(0) ATP synthase or Complex V) produces ATP from ADP in the presence of a proton gradient across the membrane which is generated by electron transport complexes of the respiratory chain. F-type ATPases consist of two structural domains, F(1) - containing the extramembraneous catalytic core and F(0) - containing the membrane proton channel, linked together by a central stalk and a peripheral stalk. During catalysis, ATP synthesis in the catalytic domain of F(1) is coupled via a rotary mechanism of the central stalk subunits to proton translocation. Part of the complex F(0) domain. A homomeric c-ring of probably 10 subunits is part of the complex rotary element. This chain is ATP synthase subunit 9, mitochondrial (ATP9), found in Mycosarcoma maydis (Corn smut fungus).